A 388-amino-acid chain; its full sequence is Quinolone resistance protein NorA (388 aa).

12 helical membrane passes run 5 to 25 (IFVL…VIPV), 42 to 62 (LLVA…GTLA), 69 to 89 (LIIC…AVGH), 99 to 119 (VIGG…IADI), 129 to 149 (FGYM…IGGF), 157 to 177 (MPFY…IVLI), 201 to 221 (WKVF…LSAF), 239 to 259 (DISI…IYFF), 269 to 289 (LTFI…LVFA), 293 to 313 (WSIM…RPAI), 331 to 351 (LNST…GALF), and 355 to 375 (IEAP…IVLI).

It belongs to the major facilitator superfamily. TCR/Tet family.

The protein localises to the cell membrane. Involved in quinolone resistance. May constitute a membrane-associated active efflux pump of hydrophilic quinolones. The sequence is that of Quinolone resistance protein NorA (norA) from Staphylococcus aureus (strain COL).